A 444-amino-acid polypeptide reads, in one-letter code: ATPase PAAT (444 aa).

Phosphoserine occurs at positions 177, 182, and 254. Residues 279-300 are disordered; that stretch reads SAQPSGEGNTTNHDEGHLMPQN. Residues 280–289 are compositionally biased toward polar residues; sequence AQPSGEGNTT. At S302 the chain carries Phosphoserine. The segment at 424-444 is disordered; it reads PPPGMPLRHYDSRERLSNGER. The span at 431–444 shows a compositional bias: basic and acidic residues; the sequence is RHYDSRERLSNGER.

Homodimer. Interacts with ABCB7, ABCB8/MITOSUR and ABCB10.

The protein localises to the cytoplasm. Its subcellular location is the mitochondrion. It carries out the reaction ATP + H2O = ADP + phosphate + H(+). Its function is as follows. ATPase that regulates mitochondrial ABC transporters ABCB7, ABCB8/MITOSUR and ABCB10. Regulates mitochondrial ferric concentration and heme biosynthesis and plays a role in the maintenance of mitochondrial homeostasis and cell survival. The chain is ATPase PAAT from Mus musculus (Mouse).